The chain runs to 166 residues: Putative protein PTGES3L (166 aa).

In terms of domain architecture, CS spans arginine 46–aspartate 154. The disordered stretch occupies residues serine 142–asparagine 166. A compositionally biased stretch (acidic residues) spans aspartate 151–asparagine 166.

The protein belongs to the p23/wos2 family.

The sequence is that of Putative protein PTGES3L from Homo sapiens (Human).